We begin with the raw amino-acid sequence, 129 residues long: Small ribosomal subunit protein uS11 (129 aa).

The protein belongs to the universal ribosomal protein uS11 family. As to quaternary structure, part of the 30S ribosomal subunit. Interacts with proteins S7 and S18. Binds to IF-3.

Located on the platform of the 30S subunit, it bridges several disparate RNA helices of the 16S rRNA. Forms part of the Shine-Dalgarno cleft in the 70S ribosome. The chain is Small ribosomal subunit protein uS11 from Allorhizobium ampelinum (strain ATCC BAA-846 / DSM 112012 / S4) (Agrobacterium vitis (strain S4)).